A 521-amino-acid chain; its full sequence is BAR/IMD domain-containing adapter protein 2 (521 aa).

The IMD domain maps to 1–250 (MSLSRSEEMH…VQLMQQMGNS (250 aa)). Residues 132–153 (DALDKCQAELKKLRKKSQGSKN) adopt a coiled-coil conformation. A phosphoserine mark is found at Ser-262, Ser-324, Ser-326, and Ser-337. Positions 297 to 370 (APVMNGVSGP…TLPRSSSMAA (74 aa)) are disordered. Positions 321-333 (QPKSTSPPQSQSK) are enriched in low complexity. Thr-341 is subject to Phosphothreonine. Phosphoserine is present on Ser-347. Positions 353 to 368 (SYATTENKTLPRSSSM) are enriched in polar residues. Position 361 is a phosphothreonine (Thr-361). Phosphoserine occurs at positions 367, 385, 396, and 455. Positions 375 to 438 (NGRMRVKAIF…PFSYTRVLDN (64 aa)) constitute an SH3 domain. The segment at 450–471 (QGKSSSTGNLLDKEDLALPPPD) is disordered.

In terms of assembly, homodimer. Interacts with CDC42 and RAC1 that have been activated by GTP binding. Interacts with ATN1, ADGRB1, DIAPH1, EPS8, SHANK1, SHANK2, SHANK3, TIAM1, WASF1 and WASF2. Interacts with ENAH after recruitment of CDC42. Phosphorylated on tyrosine residues by INSR in response to insulin treatment.

Its subcellular location is the cytoplasm. It localises to the membrane. It is found in the cell projection. The protein resides in the filopodium. The protein localises to the ruffle. Its subcellular location is the cytoskeleton. In terms of biological role, adapter protein that links membrane-bound small G-proteins to cytoplasmic effector proteins. Necessary for CDC42-mediated reorganization of the actin cytoskeleton and for RAC1-mediated membrane ruffling. Involved in the regulation of the actin cytoskeleton by WASF family members and the Arp2/3 complex. Plays a role in neurite growth. Acts syngeristically with ENAH to promote filipodia formation. Plays a role in the reorganization of the actin cytoskeleton in response to bacterial infection. Participates in actin bundling when associated with EPS8, promoting filopodial protrusions. The sequence is that of BAR/IMD domain-containing adapter protein 2 (BAIAP2) from Bos taurus (Bovine).